Consider the following 652-residue polypeptide: Oligopeptide-binding protein AliB (652 aa).

The first 24 residues, 1–24 (MKKSKSKYLTLAGLVLGTGVLLSA), serve as a signal peptide directing secretion. C25 is lipidated: N-palmitoyl cysteine. The S-diacylglycerol cysteine moiety is linked to residue C25.

This sequence belongs to the bacterial solute-binding protein 5 family.

It is found in the cell membrane. Its function is as follows. Part of the binding-protein-dependent transport system for oligopeptides; probably an oligopeptide binding protein. In Streptococcus pneumoniae serotype 4 (strain ATCC BAA-334 / TIGR4), this protein is Oligopeptide-binding protein AliB (aliB).